Consider the following 514-residue polypeptide: Peptide chain release factor 3 (514 aa).

Residues 8–268 (KKRRTFAIIS…TFLEFAPEPH (261 aa)) enclose the tr-type G domain. GTP contacts are provided by residues 17 to 24 (SHPDAGKT), 85 to 89 (DTPGH), and 139 to 142 (NKLD).

It belongs to the TRAFAC class translation factor GTPase superfamily. Classic translation factor GTPase family. PrfC subfamily.

It is found in the cytoplasm. Functionally, increases the formation of ribosomal termination complexes and stimulates activities of RF-1 and RF-2. It binds guanine nucleotides and has strong preference for UGA stop codons. It may interact directly with the ribosome. The stimulation of RF-1 and RF-2 is significantly reduced by GTP and GDP, but not by GMP. This is Peptide chain release factor 3 from Streptococcus pyogenes serotype M28 (strain MGAS6180).